The following is a 66-amino-acid chain: Delta-buthitoxin-Hj1a (66 aa).

Residues 4–66 form the LCN-type CS-alpha/beta domain; the sequence is RDAYIAQPHN…EPIKVPGKCH (63 aa). Intrachain disulfides connect C14–C65, C18–C38, C24–C48, and C28–C50.

Belongs to the long (4 C-C) scorpion toxin superfamily. Sodium channel inhibitor family. Alpha subfamily. Expressed by the venom gland.

The protein resides in the secreted. This recombinant toxin slows fast inactivation on Nav1.1/SCN1A (EC(50)=17 nM), Nav1.4/SN4A (EC(50)=7.5 nM), Nav1.5/SCN5A (EC(50)=9.2 nM) and Nav1.6/SCN8A (EC(50)=37.3 nM) voltage-gated sodium channels. On Nav1.1/SCN1A channel, it acts as an agonist by inducing a shift in both the voltage dependence of channel inactivation (alpha-toxin activity) and activation (beta-toxin activity). In vivo, shows moderate insecticidal activities. It induces irreversible paralysis in blowflies and lethal effects in D.melanogaster. This Hottentotta judaicus (Black scorpion) protein is Delta-buthitoxin-Hj1a.